The primary structure comprises 915 residues: Protein SLFN14 (915 aa).

Residues 157–167 show a composition bias toward basic residues; sequence AAQRGRRRLHP. The interval 157–176 is disordered; sequence AAQRGRRRLHPPRASNSNLQ. A required for endoribonuclease activity region spans residues 204–389; it reads ESTHVEFKRF…KVLEFKGALQ (186 aa). The required for ribosome binding stretch occupies residues 390-569; the sequence is RHLFPVTQKT…QLGCEFFNLL (180 aa).

As to quaternary structure, associates with ribosomes in an ATP-independent manner. Mg(2+) serves as cofactor. Requires Mn(2+) as cofactor. Detected in reticulocytes (at protein level).

The protein localises to the nucleus. Shows no ribosome-associated and endoribonuclease activities. In terms of biological role, displays polysome-associated endoribonuclease activity towards mRNAs and rRNAs. May play a role in RNA surveillance pathways by recognizing stalled ribosomes and triggering endonucleolytic cleavage of aberrant mRNAs. Cleaves RNAs in a magnesium-, manganese-dependent and ATP-independent manner. Involved in correct maturation of megakaryocytes and especially important for proplatelet extension. This is Protein SLFN14 from Oryctolagus cuniculus (Rabbit).